The chain runs to 330 residues: GMP reductase (330 aa).

Catalysis depends on cysteine 180, which acts as the Thioimidate intermediate. An NADP(+)-binding site is contributed by 209-232; it reads LIADGGIRHNGDIAKSVRFGASMV.

This sequence belongs to the IMPDH/GMPR family. GuaC type 2 subfamily.

It catalyses the reaction IMP + NH4(+) + NADP(+) = GMP + NADPH + 2 H(+). In terms of biological role, catalyzes the irreversible NADPH-dependent deamination of GMP to IMP. It functions in the conversion of nucleobase, nucleoside and nucleotide derivatives of G to A nucleotides, and in maintaining the intracellular balance of A and G nucleotides. This Lactobacillus johnsonii (strain CNCM I-12250 / La1 / NCC 533) protein is GMP reductase.